The chain runs to 54 residues: uncharacterized protein (54 aa).

A helical membrane pass occupies residues 21–43 (SYVVCLYMCGSDCACICVLACVV).

Its subcellular location is the membrane. This is an uncharacterized protein from Saccharomyces cerevisiae (strain ATCC 204508 / S288c) (Baker's yeast).